Here is a 473-residue protein sequence, read N- to C-terminus: Adenosylhomocysteinase (473 aa).

Substrate is bound by residues Thr-64, Asp-139, and Glu-199. Residue 200 to 202 (TTT) coordinates NAD(+). Residues Lys-229 and Asp-233 each contribute to the substrate site. NAD(+)-binding positions include Asn-234, 263–268 (GYGDVG), Glu-286, Asn-321, 342–344 (IGH), and Asn-387.

It belongs to the adenosylhomocysteinase family. NAD(+) serves as cofactor.

It localises to the cytoplasm. The enzyme catalyses S-adenosyl-L-homocysteine + H2O = L-homocysteine + adenosine. It functions in the pathway amino-acid biosynthesis; L-homocysteine biosynthesis; L-homocysteine from S-adenosyl-L-homocysteine: step 1/1. Functionally, may play a key role in the regulation of the intracellular concentration of adenosylhomocysteine. The chain is Adenosylhomocysteinase from Paraburkholderia phytofirmans (strain DSM 17436 / LMG 22146 / PsJN) (Burkholderia phytofirmans).